A 526-amino-acid polypeptide reads, in one-letter code: Reticulocyte-binding protein homolog 5 (526 aa).

The signal sequence occupies residues Met1–Ser24. The segment at Lys33–Lys51 is mediates interaction with human BSG. Asn38 and Asn214 each carry an N-linked (GlcNAc...) asparagine glycan. Cystine bridges form between Cys224–Cys317 and Cys345–Cys351. Over residues Glu259–Gln279 the composition is skewed to acidic residues. The interval Glu259 to Asp294 is disordered. The N-linked (GlcNAc...) asparagine glycan is linked to Asn297.

Forms a complex composed of RH5, P113 and human BSG/basigin; the complex bridges the merozoite and host erythrocyte membranes. Within the complex, interacts (via C-terminus) with human BSG/basigin isoform 2 (via the extracellular domain); the interaction is independent of BSG glycosylation status. Weakly interacts with P.troglodytes BSG but not with G.gorilla BSG. Also, interacts (via N-terminus) with P113; the interaction tethers RH5 to the merozoite membrane. Component of the PfRH5 adhesion complex composed of 1 copy of CyRPA, RH5 and RIPR; the complex is formed during merozoite invasion of host erythrocytes specifically at the interface between the parasite and host membranes. Within the complex, interacts with CyRPA. CyRPA recruits RIPR to the RH5-P113-BSG complex; the formation of the PfRH5 adhesion complex increases the affinity of RH5 for BSG and probably leads to the release of RH5 from P113 while maintaining the interaction of the PfRH5 adhesion complex with BSG. In terms of processing, cleaved into a 45kDa form during merozoite invasion of host erythrocyte.

The protein resides in the secreted. It is found in the cytoplasmic vesicle. The protein localises to the secretory vesicle. It localises to the rhoptry lumen. Its subcellular location is the host cell membrane. In terms of biological role, essential for the invasion of host erythrocytes by blood stage merozoites. By binding P113 at the surface of the merozoite and human BSG/basigin on the erythrocyte membrane, leads to the establishment of a tight junction between the merozoite and host erythrocyte membranes. In addition, the interaction with BSG results in BSG dimerization which triggers an increase in intracellular Ca(2+) in the erythrocyte. This essential step leads to a rearrangement of the erythrocyte cytoskeleton required for the merozoite invasion. The chain is Reticulocyte-binding protein homolog 5 from Plasmodium falciparum (isolate 3D7).